The following is a 986-amino-acid chain: Bifunctional glutamine synthetase adenylyltransferase/adenylyl-removing enzyme (986 aa).

The adenylyl removase stretch occupies residues 1–475 (MSFPLAHVDA…VFDHLIGEEK (475 aa)). The tract at residues 481–986 (TETLWHDFLE…LFEHNDKYEE (506 aa)) is adenylyl transferase.

The protein belongs to the GlnE family. The cofactor is Mg(2+).

It catalyses the reaction [glutamine synthetase]-O(4)-(5'-adenylyl)-L-tyrosine + phosphate = [glutamine synthetase]-L-tyrosine + ADP. The catalysed reaction is [glutamine synthetase]-L-tyrosine + ATP = [glutamine synthetase]-O(4)-(5'-adenylyl)-L-tyrosine + diphosphate. In terms of biological role, involved in the regulation of glutamine synthetase GlnA, a key enzyme in the process to assimilate ammonia. When cellular nitrogen levels are high, the C-terminal adenylyl transferase (AT) inactivates GlnA by covalent transfer of an adenylyl group from ATP to specific tyrosine residue of GlnA, thus reducing its activity. Conversely, when nitrogen levels are low, the N-terminal adenylyl removase (AR) activates GlnA by removing the adenylyl group by phosphorolysis, increasing its activity. The regulatory region of GlnE binds the signal transduction protein PII (GlnB) which indicates the nitrogen status of the cell. In Pasteurella multocida (strain Pm70), this protein is Bifunctional glutamine synthetase adenylyltransferase/adenylyl-removing enzyme.